Here is a 297-residue protein sequence, read N- to C-terminus: HTH-type transcriptional regulator ArgP (297 aa).

The 57-residue stretch at 4–60 folds into the HTH lysR-type domain; sequence PDYRTLQALDAVIRERGFERAAQKLCITQSAVSQRIKQLENLFGQPLLVRTIPPRPT. The segment at residues 21-40 is a DNA-binding region (H-T-H motif); the sequence is FERAAQKLCITQSAVSQRIK.

It belongs to the LysR transcriptional regulatory family. As to quaternary structure, homodimer.

In terms of biological role, controls the transcription of genes involved in arginine and lysine metabolism. In Pectobacterium carotovorum subsp. carotovorum (strain PC1), this protein is HTH-type transcriptional regulator ArgP.